Reading from the N-terminus, the 165-residue chain is Thiol peroxidase (165 aa).

In terms of domain architecture, Thioredoxin spans 18 to 164 (RKVGDKAPNF…YEAAIEAAKK (147 aa)). Cys-60 acts as the Cysteine sulfenic acid (-SOH) intermediate in catalysis. A disulfide bridge connects residues Cys-60 and Cys-94.

Belongs to the peroxiredoxin family. Tpx subfamily. Homodimer.

The catalysed reaction is a hydroperoxide + [thioredoxin]-dithiol = an alcohol + [thioredoxin]-disulfide + H2O. In terms of biological role, thiol-specific peroxidase that catalyzes the reduction of hydrogen peroxide and organic hydroperoxides to water and alcohols, respectively. Plays a role in cell protection against oxidative stress by detoxifying peroxides. The protein is Thiol peroxidase of Listeria monocytogenes serotype 4b (strain F2365).